The chain runs to 1943 residues: Beta-L-arabinobiosidase (1943 aa).

The segment at residues 1 to 32 (MHHSTRKRWLASIGAVAAVATLATGGAVTAQA) is a signal peptide (tat-type signal). 2 consecutive F5/8 type C domains span residues 892–1049 (TNVD…AYNT) and 1142–1302 (SKEI…AYAI). The 97-residue stretch at 1061-1157 (TPQVDAYVSS…HGIPSDGTVN (97 aa)) folds into the PKD domain. FIVAR domains are found at residues 1678–1716 (ANGL…EQVA), 1746–1790 (DAAK…AAVQ), and 1823–1864 (QAKK…VDAA). The tract at residues 1875-1906 (TKVEQKPGSQQPGVTDTDKDDKDNKGDRVPPT) is disordered. Residues 1890 to 1902 (DTDKDDKDNKGDR) are compositionally biased toward basic and acidic residues. A helical membrane pass occupies residues 1908–1928 (AAVSVVAAAAVLLTAAGVTIL).

The protein belongs to the glycosyl hydrolase 121 family. In terms of processing, predicted to be exported by the Tat system. The position of the signal peptide cleavage has not been experimentally proven.

Its subcellular location is the membrane. The catalysed reaction is 4-O-(beta-L-arabinofuranosyl-(1-&gt;2)-beta-L-arabinofuranosyl-(1-&gt;2)-beta-L-arabinofuranosyl)-(2S,4S)-4-hydroxyproline + H2O = 4-O-(beta-L-arabinofuranosyl)-(2S,4S)-4-hydroxyproline + beta-L-arabinofuranosyl-(1-&gt;2)-beta-L-arabinofuranose. In terms of biological role, beta-L-arabinobiosidase that removes L-arabinofuranose-beta-1,2-L-arabinofuranose disaccharide from various substrates such as carrot extensin and potato lectin. Also acts on L-arabinofuranose (Ara)-beta-1,2-Ara-beta-1,2-Ara-beta-Hyp (Ara(3)-Hyp) but not on Ara-beta-1,3-Ara-beta-1,2-Ara-beta-1,2-Ara-beta--Hyp (Ara(4)-Hyp) or Ara-beta-1,2-Ara-beta-Hyp (Ara(2)-Hyp), suggesting a specificity for unmodified Ara(3)-Hyp substrate. In the presence of 1-alkanols, shows transglycosylation activity, retaining the anomeric configuration of the arabinofuranose residue. The sequence is that of Beta-L-arabinobiosidase (hypBA2) from Bifidobacterium longum subsp. longum (strain ATCC 15707 / DSM 20219 / JCM 1217 / NCTC 11818 / E194b).